A 672-amino-acid polypeptide reads, in one-letter code: Fumonisin cluster-specific transcription factor FUM21 (672 aa).

Positions 30-56 form a DNA-binding region, zn(2)-C6 fungal-type; that stretch reads CESCKRRKVRCNGTNPCNQCQKSSIEC. Disordered regions lie at residues 65 to 111 and 190 to 212; these read ANDG…RFDG and KSSGPSYGMSEPPSRDSDPGFNT. Polar residues predominate over residues 77-93; that stretch reads SPVQHTRGSLTPPQTSP.

The protein localises to the nucleus. In terms of biological role, transcription factor that regulates the expression of the gene cluster that mediates the biosynthesis of fumonisins B1 (FB1), B2 (FB2), B3 (FB3), and B4 (FB4), which are carcinogenic mycotoxins. The sequence is that of Fumonisin cluster-specific transcription factor FUM21 (FUM21) from Gibberella moniliformis (strain M3125 / FGSC 7600) (Maize ear and stalk rot fungus).